The following is a 994-amino-acid chain: Transposase for transposon Tn2501 (994 aa).

Belongs to the transposase 7 family.

Required for transposition of transposon Tn2501. The polypeptide is Transposase for transposon Tn2501 (tnpA) (Escherichia coli).